Here is a 111-residue protein sequence, read N- to C-terminus: Translation initiation factor 1A (111 aa).

A compositionally biased stretch (basic residues) spans 1 to 13 (MKKSNNKNNHKNN). The segment at 1-30 (MKKSNNKNNHKNNHNNNQGGENIRVRSPRR) is disordered. The region spanning 23–96 (IRVRSPRRGE…EKADVIWRYT (74 aa)) is the S1-like domain.

The protein belongs to the eIF-1A family.

Its function is as follows. Seems to be required for maximal rate of protein biosynthesis. Enhances ribosome dissociation into subunits and stabilizes the binding of the initiator Met-tRNA(I) to 40 S ribosomal subunits. The protein is Translation initiation factor 1A of Methanosphaera stadtmanae (strain ATCC 43021 / DSM 3091 / JCM 11832 / MCB-3).